The chain runs to 148 residues: Putative transmembrane protein ORF23 (148 aa).

An N-terminal signal peptide occupies residues 1–18 (MVIILLGVSIVVPGLFLA). Residues 19–118 (TETPQTNTFE…YVGWPSGAET (100 aa)) lie on the Extracellular side of the membrane. A helical transmembrane segment spans residues 119-139 (IITNIADIIIMATAVMIIGAI). Residues 140-148 (YTGYKVSIK) lie on the Cytoplasmic side of the membrane.

It localises to the host membrane. The chain is Putative transmembrane protein ORF23 from His1 virus (isolate Australia/Victoria) (His1V).